The following is a 360-amino-acid chain: Phospho-N-acetylmuramoyl-pentapeptide-transferase (360 aa).

Helical transmembrane passes span 27–47 (IVSL…LIGW), 72–92 (PTMG…MWAY), 94–114 (SNPY…VGFV), 132–152 (WKYF…YCIG), 168–188 (IMPQ…VGTS), 199–219 (GLAI…AWAT), 236–256 (AGEL…FLWF), 263–283 (VFMG…IAVL), 288–308 (FLLV…ILQV), and 338–358 (VIVR…ATLK).

The protein belongs to the glycosyltransferase 4 family. MraY subfamily. The cofactor is Mg(2+).

Its subcellular location is the cell inner membrane. The catalysed reaction is UDP-N-acetyl-alpha-D-muramoyl-L-alanyl-gamma-D-glutamyl-meso-2,6-diaminopimeloyl-D-alanyl-D-alanine + di-trans,octa-cis-undecaprenyl phosphate = di-trans,octa-cis-undecaprenyl diphospho-N-acetyl-alpha-D-muramoyl-L-alanyl-D-glutamyl-meso-2,6-diaminopimeloyl-D-alanyl-D-alanine + UMP. Its pathway is cell wall biogenesis; peptidoglycan biosynthesis. Functionally, catalyzes the initial step of the lipid cycle reactions in the biosynthesis of the cell wall peptidoglycan: transfers peptidoglycan precursor phospho-MurNAc-pentapeptide from UDP-MurNAc-pentapeptide onto the lipid carrier undecaprenyl phosphate, yielding undecaprenyl-pyrophosphoryl-MurNAc-pentapeptide, known as lipid I. This chain is Phospho-N-acetylmuramoyl-pentapeptide-transferase, found in Edwardsiella ictaluri (strain 93-146).